The primary structure comprises 426 residues: Zinc finger CCCH domain-containing protein 13 (426 aa).

The C3H1-type zinc finger occupies Ala10–Gly36. Disordered stretches follow at residues Gly34–Gln155, Asn253–Ser317, and Asn390–Glu426. Basic and acidic residues-rich tracts occupy residues Arg54 to Phe70, Pro78 to Ser101, and Arg108 to Asp120. Residues Asn124–Asp133 show a composition bias toward low complexity. Residues Asn135 to Gln155 show a composition bias toward basic and acidic residues. Residues Ser144–Ser245 adopt a coiled-coil conformation. Residues Glu255–Ala272 show a composition bias toward polar residues. Over residues Glu284–Ser317 the composition is skewed to basic and acidic residues. Over residues Tyr416–Glu426 the composition is skewed to acidic residues.

In Oryza sativa subsp. japonica (Rice), this protein is Zinc finger CCCH domain-containing protein 13.